A 330-amino-acid chain; its full sequence is Aspartate--ammonia ligase (330 aa).

It belongs to the class-II aminoacyl-tRNA synthetase family. AsnA subfamily.

The protein localises to the cytoplasm. The enzyme catalyses L-aspartate + NH4(+) + ATP = L-asparagine + AMP + diphosphate + H(+). It functions in the pathway amino-acid biosynthesis; L-asparagine biosynthesis; L-asparagine from L-aspartate (ammonia route): step 1/1. The sequence is that of Aspartate--ammonia ligase from Enterobacter sp. (strain 638).